The primary structure comprises 354 residues: Kelch domain-containing protein 8B (354 aa).

Kelch repeat units lie at residues 1–31 (MAAG…HQDG), 32–79 (HLLV…VLGK), 81–127 (VLVV…ERDG), 128–175 (MVYA…LHGN), 176–222 (KIYV…MAEG), 224–281 (VFSL…SLGG), 282–329 (NIVA…QAGP), and 331–354 (LFVI…RDGV).

It localises to the cytoplasm. Its subcellular location is the midbody. In terms of biological role, involved in pinching off the separated nuclei at the cleavage furrow and in cytokinesis. Required for mitotic integrity and maintenance of chromosomal stability. Protects cells against mitotic errors, centrosomal amplification, micronucleus formation and aneuploidy. Plays a key role of midbody function involving abscission of the daughter cells during cytokinesis and appropriate chromosomal and nuclear segregation into the daughter cells. This is Kelch domain-containing protein 8B (Klhdc8b) from Rattus norvegicus (Rat).